Reading from the N-terminus, the 68-residue chain is U-actitoxin-Avt1 (68 aa).

Residues 1–22 (MNSKAIISVFLIMLVVVSCTQA) form the signal peptide. Residues 23-40 (TYETEDDDEPGPRHSEKR) constitute a propeptide that is removed on maturation. Residues 24–50 (YETEDDDEPGPRHSEKRSCARGCGGDS) form a disordered region. Basic and acidic residues predominate over residues 32 to 41 (PGPRHSEKRS). 3 cysteine pairs are disulfide-bonded: C42/C54, C46/C59, and C52/C66.

Stable protein with probable toxin activity. Does not show activity on all channels tested. Shows no hemolytic activity on rat erythrocytes. The sequence is that of U-actitoxin-Avt1 from Aulactinia veratra (Green snakelock anemone).